The following is a 227-amino-acid chain: Transmembrane emp24 domain-containing protein 1 (227 aa).

The first 23 residues, 1-23 (MMAAGTALGLALWLLLPPVGVGG), serve as a signal peptide directing secretion. Residues 24–194 (AGPPPIQDGE…LQEGNLERVN (171 aa)) lie on the Extracellular side of the membrane. One can recognise a GOLD domain in the interval 43-125 (KQCFYQSAPA…EKLVFFELIF (83 aa)). A coiled-coil region spans residues 145 to 170 (EILEVKMEDIKESIETMRIRLERSIQ). Residues 195–215 (FWSAVNVAVLLLVAVLQVCTL) traverse the membrane as a helical segment. The Cytoplasmic portion of the chain corresponds to 216-227 (KRFFQDKRPVPM). Positions 218–219 (FF) match the COPII vesicle coat-binding motif. A COPI vesicle coat-binding motif is present at residues 218–227 (FFQDKRPVPM).

Belongs to the EMP24/GP25L family. Homodimer in endoplasmic reticulum, endoplasmic reticulum-Golgi intermediate compartment and cis-Golgi network. Interacts with IL1RL1. Interacts with RNF26; this interaction is important to modulate innate immune signaling through the cGAS-STING pathway.

The protein resides in the cell membrane. The protein localises to the endoplasmic reticulum membrane. Its subcellular location is the golgi apparatus. It is found in the cis-Golgi network membrane. It localises to the endoplasmic reticulum-Golgi intermediate compartment membrane. Potential role in vesicular protein trafficking, mainly in the early secretory pathway. May act as a cargo receptor at the lumenal side for incorporation of secretory cargo molecules into transport vesicles and may be involved in vesicle coat formation at the cytoplasmic side. Plays a positive role in IL-33-mediated IL-8 and IL-6 production by interacting with interleukin-33 receptor IL1RL1. Plays also a role in the modulation of innate immune signaling through the cGAS-STING pathway by interacting with RNF26. In Bos taurus (Bovine), this protein is Transmembrane emp24 domain-containing protein 1 (TMED1).